The following is a 240-amino-acid chain: Glutathione-independent glyoxalase hsp3102 (240 aa).

Catalysis depends on residues cysteine 141, histidine 142, and glutamate 175.

Belongs to the peptidase C56 family. HSP31-like subfamily.

The protein resides in the cytoplasm. Its subcellular location is the nucleus. The catalysed reaction is methylglyoxal + H2O = (R)-lactate + H(+). Functionally, catalyzes the conversion of methylglyoxal (MG) to D-lactate in a single glutathione (GSH)-independent step. May play a role in detoxifying endogenously produced glyoxals. Involved in protection against reactive oxygen species (ROS). The polypeptide is Glutathione-independent glyoxalase hsp3102 (Schizosaccharomyces pombe (strain 972 / ATCC 24843) (Fission yeast)).